Here is a 95-residue protein sequence, read N- to C-terminus: Protein TusB (95 aa).

This sequence belongs to the DsrH/TusB family. As to quaternary structure, heterohexamer, formed by a dimer of trimers. The hexameric TusBCD complex contains 2 copies each of TusB, TusC and TusD. The TusBCD complex interacts with TusE.

It is found in the cytoplasm. Its function is as follows. Part of a sulfur-relay system required for 2-thiolation of 5-methylaminomethyl-2-thiouridine (mnm(5)s(2)U) at tRNA wobble positions. The sequence is that of Protein TusB from Sodalis glossinidius (strain morsitans).